The following is a 349-amino-acid chain: tRNA N6-adenosine threonylcarbamoyltransferase (349 aa).

Fe cation-binding residues include His117, His121, and Tyr138. Substrate contacts are provided by residues 138–142, Asp170, Asp191, and Asn271; that span reads YVAGG. Asp299 serves as a coordination point for Fe cation.

It belongs to the KAE1 / TsaD family. Fe(2+) serves as cofactor.

Its subcellular location is the cytoplasm. The catalysed reaction is L-threonylcarbamoyladenylate + adenosine(37) in tRNA = N(6)-L-threonylcarbamoyladenosine(37) in tRNA + AMP + H(+). Its function is as follows. Required for the formation of a threonylcarbamoyl group on adenosine at position 37 (t(6)A37) in tRNAs that read codons beginning with adenine. Is probably involved in the transfer of the threonylcarbamoyl moiety of threonylcarbamoyl-AMP (TC-AMP) to the N6 group of A37. The chain is tRNA N6-adenosine threonylcarbamoyltransferase from Aeropyrum pernix (strain ATCC 700893 / DSM 11879 / JCM 9820 / NBRC 100138 / K1).